Here is a 1139-residue protein sequence, read N- to C-terminus: DNA-directed RNA polymerase subunit beta (1139 aa).

A disordered region spans residues 1085–1139; it reads ADTSNRHTPSRPTYESVTSEDLSPSPAFTRVLRTADANASRSLEEDEDEEEEEDF. A compositionally biased stretch (polar residues) spans 1086 to 1106; sequence DTSNRHTPSRPTYESVTSEDL. Acidic residues predominate over residues 1128–1139; it reads EEDEDEEEEEDF.

Belongs to the RNA polymerase beta chain family. In terms of assembly, in cyanobacteria the RNAP catalytic core is composed of 2 alpha, 1 beta, 1 beta', 1 gamma and 1 omega subunit. When a sigma factor is associated with the core the holoenzyme is formed, which can initiate transcription.

The enzyme catalyses RNA(n) + a ribonucleoside 5'-triphosphate = RNA(n+1) + diphosphate. In terms of biological role, DNA-dependent RNA polymerase catalyzes the transcription of DNA into RNA using the four ribonucleoside triphosphates as substrates. This chain is DNA-directed RNA polymerase subunit beta, found in Synechococcus sp. (strain JA-2-3B'a(2-13)) (Cyanobacteria bacterium Yellowstone B-Prime).